The sequence spans 215 residues: Ras-related protein SEC4 (215 aa).

Gly27–Ser34 contributes to the GTP binding site. Positions Phe49–Phe57 match the Effector region motif. Residues Asp75–Gln79 and Asn133–Asp136 each bind GTP. A phosphoserine mark is found at Ser201 and Ser204. 2 S-geranylgeranyl cysteine lipidation sites follow: Cys214 and Cys215.

Belongs to the small GTPase superfamily. Rab family. In terms of assembly, interacts with the guanyl-nucleotide exchange factor SEC2. Interacts with SRO7, YIF1, YIP3, YIP4 and YIP5.

It localises to the cytoplasmic vesicle. Its subcellular location is the secretory vesicle membrane. The protein localises to the cell membrane. It is found in the cytoplasm. Involved in exocytosis. Maybe by regulating the binding and fusion of secretory vesicles with the cell surface. The GTP-bound form of SEC4 may interact with an effector, thereby stimulating its activity and leading to exocytotic fusion. SEC4 may be an upstream activator of the 19.5S SEC8/SEC15 particle. SEC4 probably interacts directly with SEC8; it could serve as the attachment site for the SEC8/SEC15 particle. This is Ras-related protein SEC4 (SEC4) from Saccharomyces cerevisiae (strain ATCC 204508 / S288c) (Baker's yeast).